A 721-amino-acid polypeptide reads, in one-letter code: Ribonucleoside-diphosphate reductase subunit alpha (721 aa).

Substrate is bound by residues threonine 168, 184-185, glycine 213, 393-397, and 595-599; these read SC, NLCSE, and PTGSI. A disulfide bridge connects residues cysteine 185 and cysteine 422. Asparagine 393 (proton acceptor) is an active-site residue. The active-site Cysteine radical intermediate is cysteine 395. Glutamate 397 serves as the catalytic Proton acceptor.

The protein belongs to the ribonucleoside diphosphate reductase large chain family. In terms of assembly, tetramer of two alpha and two beta subunits.

It carries out the reaction a 2'-deoxyribonucleoside 5'-diphosphate + [thioredoxin]-disulfide + H2O = a ribonucleoside 5'-diphosphate + [thioredoxin]-dithiol. With respect to regulation, under complex allosteric control mediated by deoxynucleoside triphosphates and ATP binding. The type of nucleotide bound at the specificity site determines substrate preference. It seems probable that ATP makes the enzyme reduce CDP and UDP, dGTP favors ADP reduction and dTTP favors GDP reduction. Provides the precursors necessary for DNA synthesis. Catalyzes the biosynthesis of deoxyribonucleotides from the corresponding ribonucleotides. The chain is Ribonucleoside-diphosphate reductase subunit alpha (nrdE) from Mycobacterium leprae (strain TN).